Here is a 217-residue protein sequence, read N- to C-terminus: uncharacterized protein (217 aa).

A run of 4 helical transmembrane segments spans residues 9–29 (ISLA…LSTI), 54–74 (FLST…LLEL), 103–125 (LMAY…RFLS), and 135–157 (IVFW…ASYI).

This sequence belongs to the DP1 family.

Its subcellular location is the endoplasmic reticulum membrane. This is an uncharacterized protein from Schizosaccharomyces pombe (strain 972 / ATCC 24843) (Fission yeast).